Here is a 398-residue protein sequence, read N- to C-terminus: MAKLTVKDVDLKGKKVLVRVDFNVPLKDGVITNDNRITAALPTIKYIIEQGGRAILFSHLGRVKEEADKEGKSLAPVAADLAAKLGQDVVFPGVTRGAKLEEAINALEDGQVLLVENTRFEDVDGKKESKNDEELGKYWASLGDGIFVNDAFGTAHRAHASNVGISANVEKAVAGFLLENEIAYIQEAVETPERPFVAILGGSKVSDKIGVIENLLEKADKVLIGGGMTYTFYKAQGIEIGNSLVEEDKLDVAKDLLEKSNGKLILPVDSKEANAFAGYTEVRDTEGEAVSEGFLGLDIGPKSIAKFDEALTGAKTVVWNGPMGVFENPDFQAGTIGVMDAIVKQLGVKSIIGGGDSAAAAINLGRADKFSWISTGGGASMELLEGKVLPGLAALTEK.

Residues 21-23 (DFN), R36, 59-62 (HLGR), R119, and R157 contribute to the substrate site. ATP contacts are provided by residues K208, G296, E327, and 354–357 (GGDS).

This sequence belongs to the phosphoglycerate kinase family. In terms of assembly, monomer.

Its subcellular location is the cytoplasm. It catalyses the reaction (2R)-3-phosphoglycerate + ATP = (2R)-3-phospho-glyceroyl phosphate + ADP. The protein operates within carbohydrate degradation; glycolysis; pyruvate from D-glyceraldehyde 3-phosphate: step 2/5. The chain is Phosphoglycerate kinase from Streptococcus agalactiae serotype III (strain NEM316).